The chain runs to 255 residues: Postacrosomal sheath WW domain-binding protein (255 aa).

The 73-residue stretch at 15–87 folds into the GRAM domain; the sequence is LIPNGESLLK…DLITNLTVEQ (73 aa). A run of 7 repeats spans residues 139–145, 146–152, 153–159, 160–166, 167–173, 174–180, and 202–208. The segment at 139–208 is 6 X 7 AA tandem repeat of Y-G-X-P-P-X-G; the sequence is YGAPPAGYGA…PAGYGAPPLG (70 aa). Positions 171-174 match the PPxY motif motif; it reads PPGY. Disordered regions lie at residues 180-199 and 204-255; these read GYGA…RASP and APPL…ASSS.

May play a role in meiotic resumption and pronuclear formation, mediated by a WW domain-signaling pathway during fertilization. This Macaca fascicularis (Crab-eating macaque) protein is Postacrosomal sheath WW domain-binding protein (WBP2NL).